A 450-amino-acid chain; its full sequence is 23S rRNA (uracil(1939)-C(5))-methyltransferase RlmD (450 aa).

In terms of domain architecture, TRAM spans 12-70 (SKQLSAKLSLSVNQLDHLGAGIAQHQGKVVFIPGALPDETVTVQLTEQKKNYARAKLIK). Positions 83, 89, 92, and 171 each coordinate [4Fe-4S] cluster. S-adenosyl-L-methionine contacts are provided by Q283, F312, N317, E333, D360, and D380. The active-site Nucleophile is the C406.

Belongs to the class I-like SAM-binding methyltransferase superfamily. RNA M5U methyltransferase family. RlmD subfamily.

The catalysed reaction is uridine(1939) in 23S rRNA + S-adenosyl-L-methionine = 5-methyluridine(1939) in 23S rRNA + S-adenosyl-L-homocysteine + H(+). Functionally, catalyzes the formation of 5-methyl-uridine at position 1939 (m5U1939) in 23S rRNA. This Shewanella baltica (strain OS195) protein is 23S rRNA (uracil(1939)-C(5))-methyltransferase RlmD.